A 252-amino-acid chain; its full sequence is 5'-nucleotidase SurE (252 aa).

A divalent metal cation contacts are provided by aspartate 8, aspartate 9, serine 42, and asparagine 94.

It belongs to the SurE nucleotidase family. Requires a divalent metal cation as cofactor.

The protein resides in the cytoplasm. It catalyses the reaction a ribonucleoside 5'-phosphate + H2O = a ribonucleoside + phosphate. Nucleotidase that shows phosphatase activity on nucleoside 5'-monophosphates. The sequence is that of 5'-nucleotidase SurE from Ehrlichia ruminantium (strain Gardel).